Reading from the N-terminus, the 442-residue chain is Proline--tRNA ligase (442 aa).

It belongs to the class-II aminoacyl-tRNA synthetase family. ProS type 2 subfamily. In terms of assembly, homodimer.

The protein resides in the cytoplasm. The enzyme catalyses tRNA(Pro) + L-proline + ATP = L-prolyl-tRNA(Pro) + AMP + diphosphate. Its function is as follows. Catalyzes the attachment of proline to tRNA(Pro) in a two-step reaction: proline is first activated by ATP to form Pro-AMP and then transferred to the acceptor end of tRNA(Pro). This chain is Proline--tRNA ligase, found in Mesorhizobium japonicum (strain LMG 29417 / CECT 9101 / MAFF 303099) (Mesorhizobium loti (strain MAFF 303099)).